The chain runs to 285 residues: MSIAGLVTTLPWLMNMLRAVPGATGRFERFAGWCYEQLLLKRESLAVERATNHNHEPRDVMTWLINSMDEGDRCAPPTESALQEDARTLISAGSDTVAITFTNILYFLVKHPTIYQKLQRLMDHEFPQGYSSWTYNKAKGVPYIDYIIHETLRLRPAVPMGFLRQTPPQGLQIDEIFIPGDVIVNVPTYTIHRDSRYFYDAAKFIPERWEELSPDTAAYLAFQRGPFTCSGKNLATMQLRMLISCLALRYRIHFAPGEDGVAFATQEKETLTMWIPPLQMVFRPR.

Positions 1 to 19 (MSIAGLVTTLPWLMNMLRA) are cleaved as a signal peptide. A heme-binding site is contributed by C229.

Belongs to the cytochrome P450 family. It depends on heme as a cofactor.

Its pathway is secondary metabolite biosynthesis; terpenoid biosynthesis. Cytochrome P450 monooxygenase; part of the gene cluster that mediates the biosynthesis of eupenifeldin, a bistropolone meroterpenoid that acts as an antitumor agent. The first step of eupenifeldin biosynthesis is the biosynthesis of 3-methylorcinaldehyde performed by the non-reducing polyketide synthase eupA. Oxidative dearomatization of 3-methylorcinaldehyde likely catalyzed by the FAD-dependent monooxygenase eupB is followed by oxidative ring expansion by the 2-oxoglutarate-dependent dioxygenase eupC to provide the first tropolone metabolite, tropolone stipitaldehyde. In parallel, generation of sesquiterpene alpha-humulene from farnesylpyrophosphate (FPP) is catalyzed by the terpene cyclase eupE. The cytochrome P450 monooxygenase eupD then hydroxylates humulene to humulenol. The putative Diels-Alderase eupF probably catalyzes the formation of the tropolone-humulene skeleton by linking humulenol and the polyketide moiety. The short-chain dehydrogenase/reductase eupG and the flavin-dependent monooxygenase eupH are also essential for eupenifeldin biosynthesis and are likely the additional decorating enzymes of the tropolone-humulene skeleton to produce final eupenifeldin or derivatives. In Phoma sp, this protein is Cytochrome P450 monooxygenase eupD.